Reading from the N-terminus, the 475-residue chain is Ribulose bisphosphate carboxylase large chain (475 aa).

Residues Met1–Ser2 constitute a propeptide that is removed on maturation. Pro3 bears the N-acetylproline mark. An N6,N6,N6-trimethyllysine modification is found at Lys14. Substrate is bound by residues Asn123 and Thr173. Lys175 (proton acceptor) is an active-site residue. Residue Lys177 coordinates substrate. Residues Lys201, Asp203, and Glu204 each coordinate Mg(2+). Lys201 is modified (N6-carboxylysine). The active-site Proton acceptor is the His294. Substrate is bound by residues Arg295, His327, and Ser379.

Belongs to the RuBisCO large chain family. Type I subfamily. Heterohexadecamer of 8 large chains and 8 small chains; disulfide-linked. The disulfide link is formed within the large subunit homodimers. The cofactor is Mg(2+). In terms of processing, the disulfide bond which can form in the large chain dimeric partners within the hexadecamer appears to be associated with oxidative stress and protein turnover.

The protein localises to the plastid. Its subcellular location is the chloroplast. The enzyme catalyses 2 (2R)-3-phosphoglycerate + 2 H(+) = D-ribulose 1,5-bisphosphate + CO2 + H2O. It catalyses the reaction D-ribulose 1,5-bisphosphate + O2 = 2-phosphoglycolate + (2R)-3-phosphoglycerate + 2 H(+). Its function is as follows. RuBisCO catalyzes two reactions: the carboxylation of D-ribulose 1,5-bisphosphate, the primary event in carbon dioxide fixation, as well as the oxidative fragmentation of the pentose substrate in the photorespiration process. Both reactions occur simultaneously and in competition at the same active site. This is Ribulose bisphosphate carboxylase large chain from Piper cenocladum (Ant piper).